Reading from the N-terminus, the 447-residue chain is tRNA-2-methylthio-N(6)-dimethylallyladenosine synthase (447 aa).

The MTTase N-terminal domain occupies K10 to Q128. Positions 19, 55, 89, 165, 169, and 172 each coordinate [4Fe-4S] cluster. Positions R151 to K382 constitute a Radical SAM core domain. The region spanning K384 to E447 is the TRAM domain.

This sequence belongs to the methylthiotransferase family. MiaB subfamily. In terms of assembly, monomer. [4Fe-4S] cluster is required as a cofactor.

It is found in the cytoplasm. It carries out the reaction N(6)-dimethylallyladenosine(37) in tRNA + (sulfur carrier)-SH + AH2 + 2 S-adenosyl-L-methionine = 2-methylsulfanyl-N(6)-dimethylallyladenosine(37) in tRNA + (sulfur carrier)-H + 5'-deoxyadenosine + L-methionine + A + S-adenosyl-L-homocysteine + 2 H(+). In terms of biological role, catalyzes the methylthiolation of N6-(dimethylallyl)adenosine (i(6)A), leading to the formation of 2-methylthio-N6-(dimethylallyl)adenosine (ms(2)i(6)A) at position 37 in tRNAs that read codons beginning with uridine. This is tRNA-2-methylthio-N(6)-dimethylallyladenosine synthase from Clostridium perfringens (strain ATCC 13124 / DSM 756 / JCM 1290 / NCIMB 6125 / NCTC 8237 / Type A).